Consider the following 192-residue polypeptide: Hydrophobin-like protein rodD (192 aa).

Cystine bridges form between cysteine 45/cysteine 106, cysteine 50/cysteine 99, and cysteine 107/cysteine 112.

The protein belongs to the fungal hydrophobin family. In terms of assembly, self-assembles to form functional amyloid fibrils called rodlets. Self-assembly into fibrillar rodlets occurs spontaneously at hydrophobic:hydrophilic interfaces and the rodlets further associate laterally to form amphipathic monolayers.

Aerial growth, conidiation, and dispersal of filamentous fungi in the environment rely upon a capability of their secreting small amphipathic proteins called hydrophobins (HPBs) with low sequence identity. Class I can self-assemble into an outermost layer of rodlet bundles on aerial cell surfaces, conferring cellular hydrophobicity that supports fungal growth, development and dispersal; whereas Class II form highly ordered films at water-air interfaces through intermolecular interactions but contribute nothing to the rodlet structure. RodD is a an hydrophobin-like protein that, unlike rodA, is not required for rodlet formation. The sequence is that of Hydrophobin-like protein rodD from Aspergillus fumigatus (strain ATCC MYA-4609 / CBS 101355 / FGSC A1100 / Af293) (Neosartorya fumigata).